Consider the following 515-residue polypeptide: Transcription termination factor Rho (515 aa).

The Rho RNA-BD domain maps to 146–221 (DVLFTGVLDV…VKIKSINDQD (76 aa)). ATP is bound by residues 264-269 (GKGQRA), 276-281 (KAGKTT), and arginine 307.

The protein belongs to the Rho family. As to quaternary structure, homohexamer. The homohexamer assembles into an open ring structure.

In terms of biological role, facilitates transcription termination by a mechanism that involves Rho binding to the nascent RNA, activation of Rho's RNA-dependent ATPase activity, and release of the mRNA from the DNA template. The polypeptide is Transcription termination factor Rho (Borreliella burgdorferi (strain ATCC 35210 / DSM 4680 / CIP 102532 / B31) (Borrelia burgdorferi)).